We begin with the raw amino-acid sequence, 144 residues long: Small polypeptide DEVIL 18 (144 aa).

The span at 30 to 58 (SFSTKTSSSSSKPVFTRSFSTKPTSYSSS) shows a compositional bias: low complexity. Positions 30 to 89 (SFSTKTSSSSSKPVFTRSFSTKPTSYSSSEPIFRRSFSAKPTSSKSPFLSRSGSTKCPVD) are disordered. A helical membrane pass occupies residues 42-58 (PVFTRSFSTKPTSYSSS). The span at 68-84 (AKPTSSKSPFLSRSGST) shows a compositional bias: polar residues. The required for DVL/RTFL small polypeptide activity stretch occupies residues 108–139 (SVTRKCRNMAKEHKSRFYIMKRCVLMLVCWHK).

Belongs to the DVL/RTFL small polypeptides family.

It localises to the cell membrane. Small polypeptide acting as a regulatory molecule which coordinates cellular responses required for differentiation, growth and development, probably by restricting polar cell proliferation in lateral organs and coordinating socket cell recruitment and differentiation at trichome sites. The chain is Small polypeptide DEVIL 18 from Arabidopsis thaliana (Mouse-ear cress).